The chain runs to 533 residues: Calcitonin receptor (533 aa).

The signal sequence occupies residues 1–41; that stretch reads MTPRRSRVKRRNLRKPKMRFLLVNRFTLLLLLLVSPTPVLQ. The Extracellular portion of the chain corresponds to 42–163; the sequence is APTNLTDSGL…FTSEKLQNAY (122 aa). 4 N-linked (GlcNAc...) asparagine glycosylation sites follow: Asn45, Asn90, Asn142, and Asn147. 3 disulfides stabilise this stretch: Cys72–Cys98, Cys89–Cys129, and Cys112–Cys151. A helical transmembrane segment spans residues 164–186; that stretch reads VLYYLALVGHSLSIAALVASMLI. Residues 187-198 are Cytoplasmic-facing; the sequence is FWIFKNLSCQRV. The chain crosses the membrane as a helical span at residues 199–219; sequence TLHKHMFLTYILNSIIIIIHL. Residues 220 to 273 lie on the Extracellular side of the membrane; the sequence is VEVVPNGDLVRRDPMHIFHHNTHMWTMQWELSPPLPLSAHEGKMDPHASEVISC. The cysteines at positions 273 and 343 are disulfide-linked. A helical membrane pass occupies residues 274-296; the sequence is KVLHFLHQYMMSCNYFWMLCEGI. The Cytoplasmic portion of the chain corresponds to 297-313; that stretch reads YLHTLIVMAVFTDEQRL. A helical transmembrane segment spans residues 314–334; the sequence is RWYYLLGWGFPIVPTIIHAIT. Residues 335–350 lie on the Extracellular side of the membrane; the sequence is RALYYNDNCWLSAETH. Residues 351-374 form a helical membrane-spanning segment; it reads LLYIIHGPVMVALVVNFFFLLNIV. Over 375 to 394 the chain is Cytoplasmic; the sequence is RVLVTKMRQTHEAESYMYLK. Residues 395 to 413 traverse the membrane as a helical segment; the sequence is AVKATMVLVPLLGIQFVVF. Over 414 to 421 the chain is Extracellular; that stretch reads PWRPSNKV. A helical membrane pass occupies residues 422–448; sequence LGKIYDYLMHSLIHFQGFFVATIYCFC. Over 449 to 533 the chain is Cytoplasmic; the sequence is NHEVQVTLKR…MNVIQQDASA (85 aa).

The protein belongs to the G-protein coupled receptor 2 family. In terms of assembly, heterodimer of CALCR and RAMP1, RAMP2 or RAMP3; the receptor complexes function as AMYR1, AMYR2 and AMYR3 receptors, respectively, and respond to amylin/IAPP, calcitonin/CT and CGRP1 ligands. Interacts with GPRASP2.

The protein localises to the cell membrane. G protein-coupled receptor activated by ligand peptides amylin (IAPP), calcitonin (CT/CALCA) and calcitonin gene-related peptide type 1 (CGRP1/CALCA). CALCR interacts with receptor-activity-modifying proteins RAMP1, 2 and 3 to form receptor complexes AMYR1, 2 and 3, respectively. IAPP, CT and CGRP1 activate CALCR and AMYRs with distinct modes of receptor activation resulting in specific phenotypes. Ligand binding causes a conformation change that triggers signaling via guanine nucleotide-binding proteins (G proteins) and modulates the activity of downstream effectors. Activates cAMP-dependent pathway. This chain is Calcitonin receptor, found in Mus musculus (Mouse).